A 93-amino-acid polypeptide reads, in one-letter code: Small ribosomal subunit protein uS15 (93 aa).

The protein belongs to the universal ribosomal protein uS15 family. As to quaternary structure, part of the 30S ribosomal subunit. Forms a bridge to the 50S subunit in the 70S ribosome, contacting the 23S rRNA.

In terms of biological role, one of the primary rRNA binding proteins, it binds directly to 16S rRNA where it helps nucleate assembly of the platform of the 30S subunit by binding and bridging several RNA helices of the 16S rRNA. Functionally, forms an intersubunit bridge (bridge B4) with the 23S rRNA of the 50S subunit in the ribosome. The sequence is that of Small ribosomal subunit protein uS15 from Ehrlichia chaffeensis (strain ATCC CRL-10679 / Arkansas).